The chain runs to 69 residues: Sec-independent protein translocase protein TatA (69 aa).

A helical transmembrane segment spans residues 1 to 21 (MFGLGGQELILILLIILLLFG).

Belongs to the TatA/E family. As to quaternary structure, forms a complex with TatC.

It localises to the cell inner membrane. Functionally, part of the twin-arginine translocation (Tat) system that transports large folded proteins containing a characteristic twin-arginine motif in their signal peptide across membranes. TatA could form the protein-conducting channel of the Tat system. The sequence is that of Sec-independent protein translocase protein TatA from Pelodictyon phaeoclathratiforme (strain DSM 5477 / BU-1).